We begin with the raw amino-acid sequence, 503 residues long: Glutamate--tRNA ligase (503 aa).

Residues 26-36 (PSPTGTPHVGL) carry the 'HIGH' region motif. The segment at 126–148 (TPEEVEARHRAAGRDPKLGYDNA) is disordered. The segment covering 130–148 (VEARHRAAGRDPKLGYDNA) has biased composition (basic and acidic residues). The short motif at 270–274 (KLSKR) is the 'KMSKS' region element. Position 273 (Lys273) interacts with ATP.

The protein belongs to the class-I aminoacyl-tRNA synthetase family. Glutamate--tRNA ligase type 1 subfamily. Monomer.

It localises to the cytoplasm. The catalysed reaction is tRNA(Glu) + L-glutamate + ATP = L-glutamyl-tRNA(Glu) + AMP + diphosphate. In terms of biological role, catalyzes the attachment of glutamate to tRNA(Glu) in a two-step reaction: glutamate is first activated by ATP to form Glu-AMP and then transferred to the acceptor end of tRNA(Glu). This chain is Glutamate--tRNA ligase, found in Saccharopolyspora erythraea (strain ATCC 11635 / DSM 40517 / JCM 4748 / NBRC 13426 / NCIMB 8594 / NRRL 2338).